A 446-amino-acid chain; its full sequence is Palmitoyltransferase PFA4 (446 aa).

The Cytoplasmic segment spans residues 1–8; the sequence is MAVQLKWP. A helical transmembrane segment spans residues 9–29; sequence ILGVIIPCIIIFSLSYGSHYF. Residues 30–40 lie on the Lumenal side of the membrane; sequence ILRHHLTMKQQ. A helical membrane pass occupies residues 41-61; the sequence is LIYEFYVTMIWISYLLAIYTN. The Cytoplasmic portion of the chain corresponds to 62 to 161; it reads PGRVPKNYKP…GNNNLPHFMR (100 aa). The DHHC domain occupies 114–164; that stretch reads RYCKKCNNYKPPRSHHCKICQQCVLQMDHHCPWTLNCVGNNNLPHFMRFLG. Cys144 serves as the catalytic S-palmitoyl cysteine intermediate. A helical transmembrane segment spans residues 162–182; that stretch reads FLGWIIWGTGYLMIQLIKLII. At 183–201 the chain is on the lumenal side; it reads NYYENSNMPHYLFNKTELV. Residues 202–222 form a helical membrane-spanning segment; the sequence is AIIAITPLNFFVFASILVLFI. Topologically, residues 223–446 are cytoplasmic; that stretch reads RCLINICKGM…TDFGVDEDSD (224 aa).

Belongs to the DHHC palmitoyltransferase family. PFA4 subfamily.

The protein resides in the endoplasmic reticulum membrane. The enzyme catalyses L-cysteinyl-[protein] + hexadecanoyl-CoA = S-hexadecanoyl-L-cysteinyl-[protein] + CoA. Its function is as follows. Mediates the reversible addition of palmitate to target proteins, thereby regulating their membrane association and biological function. The protein is Palmitoyltransferase PFA4 of Candida albicans (strain SC5314 / ATCC MYA-2876) (Yeast).